Here is a 975-residue protein sequence, read N- to C-terminus: Aminopeptidase N (975 aa).

Topologically, residues 1 to 11 are cytoplasmic; that stretch reads MAKGFYISKAL. Residues 12-32 form a helical; Signal-anchor for type II membrane protein membrane-spanning segment; that stretch reads GILAIVLGIAAVSTIIALSVV. Residues 33 to 74 form a cytosolic Ser/Thr-rich junction region; sequence YAQEKNKNAESSPVSSPVSSPVSSPVSPTNPSTTAATTLAQS. Residues 33-975 lie on the Extracellular side of the membrane; the sequence is YAQEKNKNAE…VLQWFRENSQ (943 aa). The disordered stretch occupies residues 41–68; it reads AESSPVSSPVSSPVSSPVSPTNPSTTAA. Residues 43–59 show a composition bias toward low complexity; that stretch reads SSPVSSPVSSPVSSPVS. The interval 75-975 is metalloprotease; the sequence is KPWNHYRLPK…VLQWFRENSQ (901 aa). Asn-134 is a glycosylation site (N-linked (GlcNAc...) asparagine). At Tyr-182 the chain carries Sulfotyrosine. Asn-240 and Asn-271 each carry an N-linked (GlcNAc...) asparagine glycan. A substrate-binding site is contributed by 358 to 362; that stretch reads GAMEN. His-394 is a Zn(2+) binding site. The active-site Proton acceptor is the Glu-395. Zn(2+)-binding residues include His-398 and Glu-417. Residues Tyr-425 and Tyr-430 each carry the sulfotyrosine modification. Asn-533, Asn-580, Asn-633, Asn-689, and Asn-747 each carry an N-linked (GlcNAc...) asparagine glycan. 2 cysteine pairs are disulfide-bonded: Cys-769–Cys-776 and Cys-806–Cys-842. An N-linked (GlcNAc...) asparagine glycan is attached at Asn-826.

This sequence belongs to the peptidase M1 family. (Microbial infection) Interacts with CCoV spike glycoprotein. In terms of assembly, homodimer. Interacts with SLC6A19. It depends on Zn(2+) as a cofactor. Sulfated. Post-translationally, N- and O-glycosylated. In terms of processing, may undergo proteolysis and give rise to a soluble form.

The protein resides in the cell membrane. It catalyses the reaction Release of an N-terminal amino acid, Xaa-|-Yaa- from a peptide, amide or arylamide. Xaa is preferably Ala, but may be most amino acids including Pro (slow action). When a terminal hydrophobic residue is followed by a prolyl residue, the two may be released as an intact Xaa-Pro dipeptide.. Its function is as follows. Broad specificity aminopeptidase which plays a role in the final digestion of peptides generated from hydrolysis of proteins by gastric and pancreatic proteases. Also involved in the processing of various peptides including peptide hormones, such as angiotensin III and IV, neuropeptides, and chemokines. May also be involved the cleavage of peptides bound to major histocompatibility complex class II molecules of antigen presenting cells. May have a role in angiogenesis and promote cholesterol crystallization. May have a role in amino acid transport by acting as binding partner of amino acid transporter SLC6A19 and regulating its activity. In terms of biological role, (Microbial infection) Probable receptor for canine coronavirus (CCoV). This is Aminopeptidase N (ANPEP) from Canis lupus familiaris (Dog).